A 671-amino-acid chain; its full sequence is Condensin complex subunit 2 (671 aa).

The span at 1–24 (MDESLTPNPKQKPASTTTRIQAPT) shows a compositional bias: polar residues. 3 disordered regions span residues 1–33 (MDES…GSND), 404–444 (NSWA…KQAE), and 510–564 (RRKN…ISQP). A Kleisin-gamma middle domain (GM domain) involved in chromosome-binding motif is present at residues 406–415 (WAGPDHWKYR). Over residues 536–556 (VYDDDDGPFDDNENDQSDAED) the composition is skewed to acidic residues.

This sequence belongs to the CND2 (condensin subunit 2) family. In terms of assembly, component of the condensin complex. In terms of tissue distribution, mostly expressed in flower buds and flowers, and, to a lower extent, in roots, stems, leaves and seedlings.

The protein resides in the cytoplasm. The protein localises to the chromosome. Its function is as follows. Regulatory subunit of the condensin complex, a complex required for conversion of interphase chromatin into mitotic-like condense chromosomes. The condensin complex probably introduces positive supercoils into relaxed DNA in the presence of type I topoisomerases and converts nicked DNA into positive knotted forms in the presence of type II topoisomerases. Essential protein. This is Condensin complex subunit 2 (CAPH) from Arabidopsis thaliana (Mouse-ear cress).